The chain runs to 364 residues: MAFSTNGSEESELYHAQIHLYKHVYNFVSSMALKSAMELGIADAIHNHGKPMTLSELASSLKLHPSKVNILHRFLRLLTHNGFFAKTIVKGKEGDEEEEIAYSLTPPSKLLISGKPTCLSSIVKGALHPSSLDMWSSSKKWFNEDKEQTLFECATGESFWDFLNKDSESSTLSMFQDAMASDSRMFKLVLQENKRVFEGLESLVDVGGGTGGVTKLIHEIFPHLKCTVFDQPQVVGNLTGNENLNFVGGDMFKSIPSADAVLLKWVLHDWNDEQSLKILKNSKEAISHKGKDGKVIIIDISIDETSDDRGLTELQLDYDLVMLTMFLGKERTKQEWEKLIYDAGFSSYKITPISGFKSLIEVYP.

Residues 206 to 209 (VGGG), Asp230, 230 to 231 (DQ), 250 to 251 (DM), and Lys264 contribute to the S-adenosyl-L-methionine site. His268 (proton acceptor) is an active-site residue.

It belongs to the class I-like SAM-binding methyltransferase superfamily. Cation-independent O-methyltransferase family. COMT subfamily. Homodimer.

The catalysed reaction is a 4'-hydroxyisoflavone + S-adenosyl-L-methionine = a 4'-methoxyisoflavone + S-adenosyl-L-homocysteine + H(+). It carries out the reaction (2R,3S)-2,4',7-trihydroxyisoflavanone + S-adenosyl-L-methionine = (2R,3S)-2,7-dihydroxy-4'-methoxyisoflavanone + S-adenosyl-L-homocysteine + H(+). Its function is as follows. 2-hydroxyisoflavanone 4'-O-methyltransferase involved in the biosynthesis of the phytoalexin medicarpin. Has also an in vitro (+)-6a-hydroxymaackiain-3-0-methyltransferase activity, converting the pterocarpan 6a-hydroxymaackiain into pisatin. No activity with di- or trihydroxylated isoflavones, including daidzein and genistein, or with (-)-medicarpin and maackiain. The dual activity for either 3- or 4'-O-methylation depends upon substrate availability. This is Isoflavone 4'-O-methyltransferase (HI4'OMT) from Medicago truncatula (Barrel medic).